Consider the following 277-residue polypeptide: Bifunctional protein FolD (277 aa).

NADP(+) contacts are provided by residues Gly-164 to Ser-166, Ser-189, and Val-230.

It belongs to the tetrahydrofolate dehydrogenase/cyclohydrolase family. As to quaternary structure, homodimer.

It carries out the reaction (6R)-5,10-methylene-5,6,7,8-tetrahydrofolate + NADP(+) = (6R)-5,10-methenyltetrahydrofolate + NADPH. The catalysed reaction is (6R)-5,10-methenyltetrahydrofolate + H2O = (6R)-10-formyltetrahydrofolate + H(+). It participates in one-carbon metabolism; tetrahydrofolate interconversion. In terms of biological role, catalyzes the oxidation of 5,10-methylenetetrahydrofolate to 5,10-methenyltetrahydrofolate and then the hydrolysis of 5,10-methenyltetrahydrofolate to 10-formyltetrahydrofolate. The protein is Bifunctional protein FolD of Exiguobacterium sibiricum (strain DSM 17290 / CCUG 55495 / CIP 109462 / JCM 13490 / 255-15).